The primary structure comprises 257 residues: Large ribosomal subunit protein eL8z (257 aa).

The protein belongs to the eukaryotic ribosomal protein eL8 family.

This is Large ribosomal subunit protein eL8z (RPL7AA) from Arabidopsis thaliana (Mouse-ear cress).